A 304-amino-acid chain; its full sequence is Putative S-adenosyl-L-methionine-dependent methyltransferase MUL_0816 (304 aa).

S-adenosyl-L-methionine is bound by residues D130 and 159 to 160 (DL).

This sequence belongs to the UPF0677 family.

In terms of biological role, exhibits S-adenosyl-L-methionine-dependent methyltransferase activity. The protein is Putative S-adenosyl-L-methionine-dependent methyltransferase MUL_0816 of Mycobacterium ulcerans (strain Agy99).